Here is a 354-residue protein sequence, read N- to C-terminus: ATP-dependent (S)-NAD(P)H-hydrate dehydratase (354 aa).

A YjeF C-terminal domain is found at 42–350 (AENILRAITP…ECLGRSLEDI (309 aa)). Residues glycine 155 and 208-214 (NVNEYKR) contribute to the (6S)-NADPHX site. ATP contacts are provided by residues 248-252 (KGKSD) and 267-276 (GSPRRCGGQG). Residue aspartate 277 coordinates (6S)-NADPHX.

The protein belongs to the NnrD/CARKD family. Requires Mg(2+) as cofactor.

The catalysed reaction is (6S)-NADHX + ATP = ADP + phosphate + NADH + H(+). The enzyme catalyses (6S)-NADPHX + ATP = ADP + phosphate + NADPH + H(+). Catalyzes the dehydration of the S-form of NAD(P)HX at the expense of ATP, which is converted to ADP. Together with NAD(P)HX epimerase, which catalyzes the epimerization of the S- and R-forms, the enzyme allows the repair of both epimers of NAD(P)HX, a damaged form of NAD(P)H that is a result of enzymatic or heat-dependent hydration. In Vitis vinifera (Grape), this protein is ATP-dependent (S)-NAD(P)H-hydrate dehydratase.